Reading from the N-terminus, the 962-residue chain is MEAPEYLDLDEIDFSDDISYSVTSLKTIPALCRRCDSQNEDRSVSSSGWNCGVSTLITNPQKPTGIADVYSKFRPVKRVSPLKHQPETLENNENEDQKNNTVEYQKGGETDQGPQPEELSPEDGVGGLPGKGSEPSQALGELEHYDLDMDEILDVPYIKSSQQLAPLTKVTSEKRILGLCTTINGLSAKTCPIASTENSTPNMTPFCVLSPVKSPHLRKAPTALRDQHKLSTEDSESSPALGKCGPAYESENHSKDFLNKVFSDPHSRKIEKSGPDCKLRSFHLQSSAAGAKTEEPINGMNWTNTQGTEERTEYLKKVRSILNIVNEGQISLLPHLAADNLDKIHDENGNNLLHIAASKGHAECLQHLTSLMGEDCLNERNTEQLTPAGLAIKNGQLECVRWMVSETEAIAELSCSKDFPSLIHYAGCYGQEKILLWLLQFMQEQGISLDEVDREGNSAVHVASQHGYLGCIQTLVEYGANVTMQNHAGEKPSQSAERHGHTLCSRYLVVVETCMSLASQVVKLTKQLKEQTVERVTLQSQLQQLLEAQKSEGKSLPSSPSSPSSPASTKSQWKALDTDEESTGKSKVGAQEGIQVLGSLSVSSRARTKGKDEDSDKILRQLLGKEISENVCTQEKLSLEFQDAQASSRNSKKIPLEKRELKLARLRQLMQRSLSESDTDSNNSEDPKNTPVKRADRPRPQPIVESVENVDSAESLHLMIKKHSLASGRRFPFGMKASKSLDGHSPSPTSESSEPDLDSHGPGLGMTPPTQPSTEATQSSPDSTAAQKVATSPKSALKSPSSKRRTSQNSKLRVTFEEPVVQMEQTGLELNGEKDKDKGRAPQRTSESGEQMKRPFGTFRSIMESLSGNQNNNNNYQPASQLKTCTLPLTSLGRKTADAKGNPVSPASKGKNKAAMYSSCIHLPSNALVEEHLRDYARHNDIKRNATKTYHMKHTAEPEPRE.

Disordered stretches follow at residues 80 to 99 (SPLK…DQKN), 104 to 137 (YQKG…EPSQ), and 222 to 249 (TALR…PAYE). ANK repeat units follow at residues 348-379 (NGNN…CLNE), 383-412 (EQLT…AIAE), 418-447 (DFPS…EQGI), and 455-484 (EGNS…NVTM). Positions 522–548 (VKLTKQLKEQTVERVTLQSQLQQLLEA) form a coiled coil. Positions 548–590 (AQKSEGKSLPSSPSSPSSPASTKSQWKALDTDEESTGKSKVGA) are disordered. Positions 554–571 (KSLPSSPSSPSSPASTKS) are enriched in low complexity. An ANK 5 repeat occupies 602–631 (VSSRARTKGKDEDSDKILRQLLGKEISENV). The span at 667-684 (RQLMQRSLSESDTDSNNS) shows a compositional bias: low complexity. The tract at residues 667–852 (RQLMQRSLSE…QRTSESGEQM (186 aa)) is disordered. Residues 685–699 (EDPKNTPVKRADRPR) are compositionally biased toward basic and acidic residues. The ANK 6 repeat unit spans residues 698–728 (PRPQPIVESVENVDSAESLHLMIKKHSLASG). Residues 772 to 790 (PSTEATQSSPDSTAAQKVA) show a composition bias toward polar residues. A compositionally biased stretch (basic and acidic residues) spans 831-840 (NGEKDKDKGR).

In terms of assembly, associates with SNCA, RNF19A and PRKN. Post-translationally, ubiquitinated; mediated by SIAH1 or RNF19A and leading to its subsequent proteasomal degradation.

The polypeptide is Synphilin-1 (Sncaip) (Mus musculus (Mouse)).